A 118-amino-acid chain; its full sequence is Ribonuclease P protein component 4 (118 aa).

4 residues coordinate Zn(2+): Cys-59, Cys-62, Cys-85, and Cys-88.

Belongs to the eukaryotic/archaeal RNase P protein component 4 family. As to quaternary structure, consists of a catalytic RNA component and at least 4-5 protein subunits. Zn(2+) is required as a cofactor.

The protein localises to the cytoplasm. It carries out the reaction Endonucleolytic cleavage of RNA, removing 5'-extranucleotides from tRNA precursor.. In terms of biological role, part of ribonuclease P, a protein complex that generates mature tRNA molecules by cleaving their 5'-ends. The protein is Ribonuclease P protein component 4 of Sulfolobus acidocaldarius (strain ATCC 33909 / DSM 639 / JCM 8929 / NBRC 15157 / NCIMB 11770).